The primary structure comprises 168 residues: Large ribosomal subunit protein bL17 (168 aa).

Basic and acidic residues predominate over residues 121 to 146 (AEAEGGEEKAEQKTEKKAAKAKEPKA). Positions 121–168 (AEAEGGEEKAEQKTEKKAAKAKEPKAAKAPKKAAAKPKAKAEKKGAEE) are disordered. A compositionally biased stretch (basic residues) spans 148–158 (KAPKKAAAKPK). The segment covering 159-168 (AKAEKKGAEE) has biased composition (basic and acidic residues).

It belongs to the bacterial ribosomal protein bL17 family. As to quaternary structure, part of the 50S ribosomal subunit. Contacts protein L32.

The protein is Large ribosomal subunit protein bL17 of Anaeromyxobacter sp. (strain Fw109-5).